We begin with the raw amino-acid sequence, 85 residues long: UPF0297 protein LGAS_0422 (85 aa).

The protein belongs to the UPF0297 family.

This chain is UPF0297 protein LGAS_0422, found in Lactobacillus gasseri (strain ATCC 33323 / DSM 20243 / BCRC 14619 / CIP 102991 / JCM 1131 / KCTC 3163 / NCIMB 11718 / NCTC 13722 / AM63).